The chain runs to 299 residues: Plant-type L-asparaginase (299 aa).

Thr169 serves as the catalytic Nucleophile. Substrate-binding positions include 197-200 and 220-223; these read RVGD and TGVG.

Belongs to the Ntn-hydrolase family. In terms of assembly, heterotetramer of two alpha and two beta chains arranged as a dimer of alpha/beta heterodimers. The uncleaved protein forms homodimers. In terms of processing, autocleaved. Generates the alpha and beta subunits. The N-terminal residue of the beta subunit is thought to be responsible for the nucleophile hydrolase activity.

The catalysed reaction is L-asparagine + H2O = L-aspartate + NH4(+). With respect to regulation, divalent metal ions and EDTA do not have significant effect on enzyme activity, indicating that activity is metal-independent. Catalyzes the hydrolysis of L-asparagine into L-aspartate and ammonia. Also displays D-asparaginase activity, which is about 20% of the L-asparaginase activity. Does not exhibit glutaminase activity. In Pyrobaculum calidifontis (strain DSM 21063 / JCM 11548 / VA1), this protein is Plant-type L-asparaginase.